Reading from the N-terminus, the 44-residue chain is MQSVITDVTGQLTAVQADITTIGGAIIVLAAVVLGIRWIKAQFF.

The Periplasmic portion of the chain corresponds to 1 to 18 (MQSVITDVTGQLTAVQAD). The helical transmembrane segment at 19–39 (ITTIGGAIIVLAAVVLGIRWI) threads the bilayer. Over 40-44 (KAQFF) the chain is Cytoplasmic.

It belongs to the inovirus capsid protein family. Homomultimerizes. There are several thousand copies of this protein in the phage capsid.

The protein localises to the virion. It is found in the host cell inner membrane. Functionally, self assembles to form a helical capsid wrapping up the viral genomic DNA. The capsid displays a filamentous structure with a length of 760-1950 nm and a width of 6-8 nm. The virion assembly and budding take place at the host inner membrane. The protein is Capsid protein G8P (VIII) of Pseudomonas aeruginosa (Bacteriophage Pf3).